The primary structure comprises 433 residues: Gamma-glutamyl phosphate reductase (433 aa).

Belongs to the gamma-glutamyl phosphate reductase family.

It localises to the cytoplasm. It carries out the reaction L-glutamate 5-semialdehyde + phosphate + NADP(+) = L-glutamyl 5-phosphate + NADPH + H(+). The protein operates within amino-acid biosynthesis; L-proline biosynthesis; L-glutamate 5-semialdehyde from L-glutamate: step 2/2. Catalyzes the NADPH-dependent reduction of L-glutamate 5-phosphate into L-glutamate 5-semialdehyde and phosphate. The product spontaneously undergoes cyclization to form 1-pyrroline-5-carboxylate. In Psychrobacter cryohalolentis (strain ATCC BAA-1226 / DSM 17306 / VKM B-2378 / K5), this protein is Gamma-glutamyl phosphate reductase.